Consider the following 268-residue polypeptide: Syntaxin-22 (268 aa).

The tract at residues 1 to 23 is disordered; sequence MSFQDLESGRGRSTRKFNGGRQD. The residue at position 2 (S2) is an N-acetylserine. Residues 2-246 lie on the Cytoplasmic side of the membrane; the sequence is SFQDLESGRG…AAKTQKSNSS (245 aa). The 63-residue stretch at 175-237 folds into the t-SNARE coiled-coil homology domain; that stretch reads EAVIEEREQG…SQGKSQLVQA (63 aa). A helical; Anchor for type IV membrane protein membrane pass occupies residues 247-267; it reads LTCLLLVIFGIVLLIVIIVLA. A268 is a topological domain (vesicular).

It belongs to the syntaxin family. Interacts with VTI11 and SYP51 to form a t-SNARE complex, but not with VPS45. In terms of tissue distribution, expressed in roots, leaves, stems, flower and green siliques.

The protein localises to the prevacuolar compartment membrane. It is found in the vacuole membrane. In terms of biological role, may provide the t-SNARE function in the vacuolar assembly. Promotes the formation of vacuolar membrane 'bulbs'. Required for inflorescence stem gravitropism. This Arabidopsis thaliana (Mouse-ear cress) protein is Syntaxin-22 (SYP22).